We begin with the raw amino-acid sequence, 122 residues long: Putative 2'-deoxynucleoside 5'-phosphate N-hydrolase 1 (122 aa).

Substrate contacts are provided by residues 4 to 10 (FLSGSIR), Y19, H37, E83, and 105 to 107 (SAM).

This sequence belongs to the 2'-deoxynucleoside 5'-phosphate N-hydrolase 1 family. As to quaternary structure, monomer and homodimer.

The catalysed reaction is a pyrimidine 2'-deoxyribonucleoside 5'-phosphate + H2O = a pyrimidine nucleobase + 2-deoxy-D-ribose 5-phosphate. The enzyme catalyses a purine 2'-deoxyribonucleoside 5'-phosphate + H2O = a purine nucleobase + 2-deoxy-D-ribose 5-phosphate. Its function is as follows. Catalyzes the cleavage of the N-glycosidic bond of deoxyribonucleoside 5'-monophosphates to yield deoxyribose 5-phosphate and a purine or pyrimidine base. This chain is Putative 2'-deoxynucleoside 5'-phosphate N-hydrolase 1, found in Methanococcoides burtonii (strain DSM 6242 / NBRC 107633 / OCM 468 / ACE-M).